The chain runs to 494 residues: uncharacterized protein (494 aa).

VOC domains follow at residues 18-174 (FIDC…FINR) and 229-408 (SLDH…FGIL). Residues H232, H349, and E460 each contribute to the Fe cation site.

It belongs to the 4HPPD family. Requires Fe cation as cofactor.

Its function is as follows. May have dioxygenase activity. This is an uncharacterized protein from Dictyostelium discoideum (Social amoeba).